Here is a 452-residue protein sequence, read N- to C-terminus: Tryptophan biosynthesis protein TrpCF (452 aa).

Positions 1–256 (MQTVLAKIVA…AAVRRVLLGE (256 aa)) are indole-3-glycerol phosphate synthase. The segment at 257–452 (NKVCGLTRAQ…ASVFQTLRAY (196 aa)) is N-(5'-phosphoribosyl)anthranilate isomerase.

It in the N-terminal section; belongs to the TrpC family. The protein in the C-terminal section; belongs to the TrpF family. In terms of assembly, monomer.

It catalyses the reaction N-(5-phospho-beta-D-ribosyl)anthranilate = 1-(2-carboxyphenylamino)-1-deoxy-D-ribulose 5-phosphate. The enzyme catalyses 1-(2-carboxyphenylamino)-1-deoxy-D-ribulose 5-phosphate + H(+) = (1S,2R)-1-C-(indol-3-yl)glycerol 3-phosphate + CO2 + H2O. It participates in amino-acid biosynthesis; L-tryptophan biosynthesis; L-tryptophan from chorismate: step 3/5. It functions in the pathway amino-acid biosynthesis; L-tryptophan biosynthesis; L-tryptophan from chorismate: step 4/5. Functionally, bifunctional enzyme that catalyzes two sequential steps of tryptophan biosynthetic pathway. The first reaction is catalyzed by the isomerase, coded by the TrpF domain; the second reaction is catalyzed by the synthase, coded by the TrpC domain. The protein is Tryptophan biosynthesis protein TrpCF (trpC) of Salmonella typhimurium (strain LT2 / SGSC1412 / ATCC 700720).